Consider the following 159-residue polypeptide: Large ribosomal subunit protein eL29 (159 aa).

Residues 1 to 26 are compositionally biased toward basic residues; sequence MAKSKNHTTHNQSRKWHRNGIKKPRS. The disordered stretch occupies residues 1–32; that stretch reads MAKSKNHTTHNQSRKWHRNGIKKPRSQRYESL. Lys-5 bears the N6-methyllysine mark. Ser-31 is subject to Phosphoserine. At Lys-33 the chain carries N6-acetyllysine. The segment covering 117 to 127 has biased composition (basic residues); it reads RLCRPKAKAKA. A disordered region spans residues 117-159; it reads RLCRPKAKAKAKAKDQTKAQAAAPASVPAQAPKRTQAPTKASE. Positions 134–149 are enriched in low complexity; sequence KAQAAAPASVPAQAPK. Ser-142 bears the Phosphoserine mark.

Belongs to the eukaryotic ribosomal protein eL29 family. Component of the large ribosomal subunit.

The protein resides in the cytoplasm. Functionally, component of the large ribosomal subunit. The ribosome is a large ribonucleoprotein complex responsible for the synthesis of proteins in the cell. The polypeptide is Large ribosomal subunit protein eL29 (RPL29) (Homo sapiens (Human)).